We begin with the raw amino-acid sequence, 764 residues long: Putative alpha-1,3-mannosyltransferase MNN13 (764 aa).

At M1–R13 the chain is on the cytoplasmic side. The chain crosses the membrane as a helical span at residues V14–N34. Over S35–Y764 the chain is Lumenal. N-linked (GlcNAc...) asparagine glycosylation is found at N45 and N204.

Belongs to the MNN1/MNT family.

It localises to the golgi apparatus membrane. It functions in the pathway protein modification; protein glycosylation. In terms of biological role, responsible for addition of the terminal mannose residues to the outer chain of core N-linked polysaccharides and to O-linked mannotriose. Implicated in late Golgi modifications. The polypeptide is Putative alpha-1,3-mannosyltransferase MNN13 (MNN13) (Candida albicans (strain SC5314 / ATCC MYA-2876) (Yeast)).